Consider the following 222-residue polypeptide: Histidine biosynthesis bifunctional protein HisIE (222 aa).

Positions 1 to 128 are phosphoribosyl-AMP cyclohydrolase; it reads MQPLSPAFID…SLTLPPPMDA (128 aa). The segment at 129 to 222 is phosphoribosyl-ATP pyrophosphohydrolase; it reads CSELFRVIDQ…ANRRGAPRRN (94 aa).

In the N-terminal section; belongs to the PRA-CH family. The protein in the C-terminal section; belongs to the PRA-PH family.

Its subcellular location is the cytoplasm. It carries out the reaction 1-(5-phospho-beta-D-ribosyl)-ATP + H2O = 1-(5-phospho-beta-D-ribosyl)-5'-AMP + diphosphate + H(+). The enzyme catalyses 1-(5-phospho-beta-D-ribosyl)-5'-AMP + H2O = 1-(5-phospho-beta-D-ribosyl)-5-[(5-phospho-beta-D-ribosylamino)methylideneamino]imidazole-4-carboxamide. It functions in the pathway amino-acid biosynthesis; L-histidine biosynthesis; L-histidine from 5-phospho-alpha-D-ribose 1-diphosphate: step 2/9. Its pathway is amino-acid biosynthesis; L-histidine biosynthesis; L-histidine from 5-phospho-alpha-D-ribose 1-diphosphate: step 3/9. This Prochlorococcus marinus (strain MIT 9313) protein is Histidine biosynthesis bifunctional protein HisIE.